The following is a 395-amino-acid chain: Phosphopentomutase (395 aa).

Residues aspartate 14, aspartate 286, histidine 291, aspartate 327, histidine 328, and histidine 339 each coordinate Mn(2+).

This sequence belongs to the phosphopentomutase family. Mn(2+) is required as a cofactor.

It is found in the cytoplasm. The enzyme catalyses 2-deoxy-alpha-D-ribose 1-phosphate = 2-deoxy-D-ribose 5-phosphate. The catalysed reaction is alpha-D-ribose 1-phosphate = D-ribose 5-phosphate. Its pathway is carbohydrate degradation; 2-deoxy-D-ribose 1-phosphate degradation; D-glyceraldehyde 3-phosphate and acetaldehyde from 2-deoxy-alpha-D-ribose 1-phosphate: step 1/2. In terms of biological role, isomerase that catalyzes the conversion of deoxy-ribose 1-phosphate (dRib-1-P) and ribose 1-phosphate (Rib-1-P) to deoxy-ribose 5-phosphate (dRib-5-P) and ribose 5-phosphate (Rib-5-P), respectively. The polypeptide is Phosphopentomutase (Staphylococcus haemolyticus (strain JCSC1435)).